The following is a 173-amino-acid chain: CASP-like protein 2D1 (173 aa).

Over Met-1–Asp-9 the chain is Cytoplasmic. The helical transmembrane segment at Ser-10–Thr-29 threads the bilayer. Over Asn-30–Tyr-50 the chain is Extracellular. N-linked (GlcNAc...) asparagine glycosylation is present at Asn-34. The helical transmembrane segment at Met-51–Ile-71 threads the bilayer. Residues Lys-72 to Gln-86 are Cytoplasmic-facing. Residues Ile-87–Tyr-107 traverse the membrane as a helical segment. The Extracellular segment spans residues Asn-108–Thr-131. A helical transmembrane segment spans residues Ala-132–Tyr-152. At Arg-153–Thr-173 the chain is on the cytoplasmic side.

This sequence belongs to the Casparian strip membrane proteins (CASP) family. Homodimer and heterodimers.

It is found in the cell membrane. This is CASP-like protein 2D1 from Ricinus communis (Castor bean).